The sequence spans 140 residues: Large ribosomal subunit protein bL17 (140 aa).

It belongs to the bacterial ribosomal protein bL17 family. As to quaternary structure, part of the 50S ribosomal subunit. Contacts protein L32.

This chain is Large ribosomal subunit protein bL17, found in Gluconobacter oxydans (strain 621H) (Gluconobacter suboxydans).